A 506-amino-acid polypeptide reads, in one-letter code: Aldehyde dehydrogenase [NAD(P)+] 2 (506 aa).

Glu268 acts as the Proton acceptor in catalysis. Cys302 acts as the Nucleophile in catalysis.

The protein belongs to the aldehyde dehydrogenase family.

Its subcellular location is the cytoplasm. It catalyses the reaction an aldehyde + NAD(+) + H2O = a carboxylate + NADH + 2 H(+). The enzyme catalyses 3-aminopropanal + NAD(+) + H2O = beta-alanine + NADH + 2 H(+). In terms of biological role, cytoplasmic aldehyde dehydrogenase involved in ethanol oxidation. Involved in pantothenic acid production through the conversion of 3-aminopropanal to beta-alanine, an intermediate in pantothenic acid (vitamin B5) and coenzyme A (CoA) biosynthesis. The protein is Aldehyde dehydrogenase [NAD(P)+] 2 (ALD3) of Saccharomyces cerevisiae (strain ATCC 204508 / S288c) (Baker's yeast).